Reading from the N-terminus, the 324-residue chain is Methyltransferase pytC (324 aa).

The protein belongs to the methyltransferase superfamily. LaeA methyltransferase family.

It participates in secondary metabolite biosynthesis. Functionally, methyltransferase; part of the gene cluster that mediates the biosynthesis of pyranterreones, a family of antioxidative compounds. The first step of pyranonigrins biosynthesis is performed by the hybrid PKS-NRPS synthetase pytA that condenses 4 malonyl-CoA units ato the acetyl starter unit by the modular PKS of pytA. The acyl chain is then connected to an L-serine through the amide bond by the modular NRPS of pytA. A tetramic acid is formed and released from the PKS-NRPS pytA to give pyranterreone 5 with the help of the thioesterase pytI. Pyranterreone 5 could be methylated by pytC to afford pyranterreone 6. Both pyranterreones 5 and 6 are subsequently oxidized by the FAD-linked oxidoreductase pytB and the cytochrome P450 monooxygenase pytD to form the fused gamma-pyrone core, resulting in pyranterreones 7 and 11, respectively. The hydroxy group at C-8 of pyranterreones 7 and 11 are dehydrated by the aspartyl protease pytH to form a delta-7 double bond to give pyranterreones 3 and 1, 2 accordingly. The exo-methylene of pyranterreone 3 could be reduced into a pendant methyl by reductase pytE to provide pyranterreone 4, also known as cordylactam. Pyranterreone 4 can be reconverted to pyranterreone 3 through pytB-catalyzed dehydrogenation or further oxidized to pyranterreones 9 and 10. This chain is Methyltransferase pytC, found in Aspergillus terreus (strain NIH 2624 / FGSC A1156).